The primary structure comprises 124 residues: S-adenosylmethionine decarboxylase proenzyme (124 aa).

Serine 63 acts as the Schiff-base intermediate with substrate; via pyruvic acid in catalysis. Residue serine 63 is modified to Pyruvic acid (Ser); by autocatalysis. The active-site Proton acceptor; for processing activity is histidine 68. Cysteine 83 (proton donor; for catalytic activity) is an active-site residue.

This sequence belongs to the prokaryotic AdoMetDC family. Type 1 subfamily. In terms of assembly, heterotetramer of two alpha and two beta chains arranged as a dimer of alpha/beta heterodimers. Requires pyruvate as cofactor. Is synthesized initially as an inactive proenzyme. Formation of the active enzyme involves a self-maturation process in which the active site pyruvoyl group is generated from an internal serine residue via an autocatalytic post-translational modification. Two non-identical subunits are generated from the proenzyme in this reaction, and the pyruvate is formed at the N-terminus of the alpha chain, which is derived from the carboxyl end of the proenzyme. The post-translation cleavage follows an unusual pathway, termed non-hydrolytic serinolysis, in which the side chain hydroxyl group of the serine supplies its oxygen atom to form the C-terminus of the beta chain, while the remainder of the serine residue undergoes an oxidative deamination to produce ammonia and the pyruvoyl group blocking the N-terminus of the alpha chain.

The catalysed reaction is S-adenosyl-L-methionine + H(+) = S-adenosyl 3-(methylsulfanyl)propylamine + CO2. It functions in the pathway amine and polyamine biosynthesis; S-adenosylmethioninamine biosynthesis; S-adenosylmethioninamine from S-adenosyl-L-methionine: step 1/1. Its function is as follows. Catalyzes the decarboxylation of S-adenosylmethionine to S-adenosylmethioninamine (dcAdoMet), the propylamine donor required for the synthesis of the polyamines spermine and spermidine from the diamine putrescine. In Caldicellulosiruptor bescii (strain ATCC BAA-1888 / DSM 6725 / KCTC 15123 / Z-1320) (Anaerocellum thermophilum), this protein is S-adenosylmethionine decarboxylase proenzyme.